Consider the following 360-residue polypeptide: Dihydroorotate dehydrogenase (quinone) (360 aa).

FMN contacts are provided by residues 66-70 and Thr90; that span reads AGFDK. Lys70 contacts substrate. 115–119 serves as a coordination point for substrate; sequence NRMGF. The FMN site is built by Asn143 and Asn176. Asn176 provides a ligand contact to substrate. The active-site Nucleophile is the Ser179. A substrate-binding site is contributed by Asn181. FMN contacts are provided by Lys212 and Thr240. 241-242 is a binding site for substrate; sequence NT. Residues Gly264, Gly293, and 314 to 315 each bind FMN; that span reads YT.

This sequence belongs to the dihydroorotate dehydrogenase family. Type 2 subfamily. In terms of assembly, monomer. The cofactor is FMN.

It is found in the cell membrane. It carries out the reaction (S)-dihydroorotate + a quinone = orotate + a quinol. It functions in the pathway pyrimidine metabolism; UMP biosynthesis via de novo pathway; orotate from (S)-dihydroorotate (quinone route): step 1/1. Functionally, catalyzes the conversion of dihydroorotate to orotate with quinone as electron acceptor. The polypeptide is Dihydroorotate dehydrogenase (quinone) (Mycobacterium ulcerans (strain Agy99)).